Consider the following 2219-residue polypeptide: RNA-directed RNA polymerase L (2219 aa).

The segment at 26 to 289 is endonuclease; the sequence is KLAFLVQTEP…TTEDDVEYLI (264 aa). Mn(2+) is bound by residues Glu-51, Asp-89, and Glu-102. Lys-115 is a catalytic residue. A RdRp catalytic domain is found at 1177-1373; the sequence is LSMKLNVSLA…YMSDQLNKFV (197 aa). Asp-1335 is a binding site for Mg(2+).

The protein belongs to the Bunyavirales RNA polymerase family. Homomultimer; the oligomeric structure is essential for the polymerase activity. Interacts with nucleoprotein N. Interacts with protein Z; this interaction inhibits viral transcription and replication, Z partially blocks the product exit tunnel for the releasing nascent RNA product. It depends on Mn(2+) as a cofactor. Mg(2+) serves as cofactor.

The protein localises to the virion. Its subcellular location is the host cytoplasm. The catalysed reaction is RNA(n) + a ribonucleoside 5'-triphosphate = RNA(n+1) + diphosphate. Its function is as follows. RNA-dependent RNA polymerase, which is responsible for the replication and transcription of the viral RNA genome using antigenomic RNA as an intermediate. During transcription, synthesizes subgenomic RNAs and assures their capping by a cap-snatching mechanism, which involves the endonuclease activity cleaving the host capped pre-mRNAs. These short capped RNAs are then used as primers for viral transcription. The 3'-end of subgenomic mRNAs molecules are heterogeneous and not polyadenylated. The replicase function is to direct synthesis of antigenomic and genomic RNA which are encapsidated and non capped. As a consequence of the use of the same enzyme for both transcription and replication, these mechanisms need to be well coordinated. These processes may be regulated by proteins N and Z in a dose-dependent manner. Z protein inhibits the viral polymerase L und thus the viral transcription and RNA synthesis. The sequence is that of RNA-directed RNA polymerase L from Homo sapiens (Human).